Here is a 559-residue protein sequence, read N- to C-terminus: Chromatin assembly factor 1 subunit B (559 aa).

WD repeat units lie at residues 11–54, 64–103, 127–166, 169–208, 228–279, 299–340, and 344–385; these read HNKE…DGKA, RHTKAVNVVRFSPTGEILASGGDDAVILLWKVNDNKEPEQ, GHLEDVYDICWATDGNLMASASVDNTAIIWDVSKGQKISI, EHKSYVQGVTWDPLGQYVATLSCDRVLRVYSIQKKRVAFN, FHDD…RPIA, ELRP…PFGY, and IHYH…IPLK. Residues 386 to 559 form a disordered region; sequence EKPVLNMRTP…NKGGTESLDP (174 aa). Residue Thr-394 is modified to Phosphothreonine. Ser-409 carries the phosphoserine modification. The residue at position 419 (Thr-419) is a Phosphothreonine. Phosphoserine is present on Ser-429. The segment covering 430-444 has biased composition (low complexity); the sequence is PGTTPPQARQAPAPT. Position 433 is a phosphothreonine (Thr-433). Ser-458 carries the phosphoserine modification. Residues 469 to 495 show a composition bias toward polar residues; the sequence is LQPSSQNTKAHPSRRVTLNTLQAWSKT. Lys-494 is subject to N6-acetyllysine. Residues Thr-495, Thr-509, Thr-521, and Thr-531 each carry the phosphothreonine modification. Residues 509–526 are compositionally biased toward low complexity; sequence TPPSSVPTSVISTPSTEE. Ser-538 carries the post-translational modification Phosphoserine. A compositionally biased stretch (basic and acidic residues) spans 541–552; sequence ELKRPRLDENKG.

The protein belongs to the WD repeat HIR1 family. Subunit of the CAF-1 complex that contains RBBP4, CHAF1B and CHAF1A. CHAF1A binds directly to CHAF1B. Only minor amounts of RBBP4 are complexed with CHAF1A and CHAF1B in G1 phase. In G2 and S phase also monomeric CHAF1B is detected. Interacts with histones H3.1, H3.2 and H3.1t. Differentially phosphorylated during cell cycle. During mitosis the p60 subunit of inactive CAF-1 is hyperphosphorylated and displaced into the cytosol. Progressivly dephosphorylated from G1 to S and G2 phase. Phosphorylated p60 is recruited to chromatin undergoing DNA repair after UV irradiation in G1, S or G2 phases.

The protein localises to the nucleus. Its subcellular location is the cytoplasm. In terms of biological role, acts as a component of the histone chaperone complex chromatin assembly factor 1 (CAF-1), which assembles histone octamers onto DNA during replication and repair. CAF-1 performs the first step of the nucleosome assembly process, bringing newly synthesized histones H3 and H4 to replicating DNA; histones H2A/H2B can bind to this chromatin precursor subsequent to DNA replication to complete the histone octamer. In Homo sapiens (Human), this protein is Chromatin assembly factor 1 subunit B.